Consider the following 84-residue polypeptide: Defensin-like protein 199 (84 aa).

A signal peptide spans 1–24; it reads MAITMRTLVAFVFTIFFIISFVHS. Cystine bridges form between cysteine 40/cysteine 80, cysteine 47/cysteine 72, cysteine 56/cysteine 78, and cysteine 60/cysteine 79.

Belongs to the DEFL family.

It is found in the secreted. This is Defensin-like protein 199 from Arabidopsis thaliana (Mouse-ear cress).